A 373-amino-acid polypeptide reads, in one-letter code: Probable pectin lyase C (373 aa).

The signal sequence occupies residues 1 to 17; that stretch reads MKKYLLSLLAAVTYTTA. 2 disulfides stabilise this stretch: C78–C95 and C87–C215. 2 N-linked (GlcNAc...) asparagine glycosylation sites follow: N140 and N229. R245 is an active-site residue. Residues C315 and C323 are joined by a disulfide bond.

Belongs to the polysaccharide lyase 1 family.

Its subcellular location is the secreted. The catalysed reaction is Eliminative cleavage of (1-&gt;4)-alpha-D-galacturonan methyl ester to give oligosaccharides with 4-deoxy-6-O-methyl-alpha-D-galact-4-enuronosyl groups at their non-reducing ends.. In terms of biological role, pectinolytic enzymes consist of four classes of enzymes: pectin lyase, polygalacturonase, pectin methylesterase and rhamnogalacturonase. Among pectinolytic enzymes, pectin lyase is the most important in depolymerization of pectin, since it cleaves internal glycosidic bonds of highly methylated pectins. The chain is Probable pectin lyase C (pelC) from Emericella nidulans (strain FGSC A4 / ATCC 38163 / CBS 112.46 / NRRL 194 / M139) (Aspergillus nidulans).